Consider the following 291-residue polypeptide: ATP synthase gamma chain (291 aa).

This sequence belongs to the ATPase gamma chain family. F-type ATPases have 2 components, CF(1) - the catalytic core - and CF(0) - the membrane proton channel. CF(1) has five subunits: alpha(3), beta(3), gamma(1), delta(1), epsilon(1). CF(0) has three main subunits: a, b and c.

It is found in the cell inner membrane. Its function is as follows. Produces ATP from ADP in the presence of a proton gradient across the membrane. The gamma chain is believed to be important in regulating ATPase activity and the flow of protons through the CF(0) complex. This is ATP synthase gamma chain from Neisseria gonorrhoeae (strain ATCC 700825 / FA 1090).